The primary structure comprises 319 residues: tRNA N6-adenosine threonylcarbamoyltransferase (319 aa).

Residues His110 and His114 each contribute to the Fe cation site. Substrate-binding positions include 135–139 (VVSGG), Asp168, Gly181, Asp185, and Asn277. Asp301 contributes to the Fe cation binding site.

This sequence belongs to the KAE1 / TsaD family. It depends on Fe(2+) as a cofactor.

The protein localises to the cytoplasm. It catalyses the reaction L-threonylcarbamoyladenylate + adenosine(37) in tRNA = N(6)-L-threonylcarbamoyladenosine(37) in tRNA + AMP + H(+). Required for the formation of a threonylcarbamoyl group on adenosine at position 37 (t(6)A37) in tRNAs that read codons beginning with adenine. Is involved in the transfer of the threonylcarbamoyl moiety of threonylcarbamoyl-AMP (TC-AMP) to the N6 group of A37, together with TsaE and TsaB. TsaD likely plays a direct catalytic role in this reaction. This Mycoplasma pneumoniae (strain ATCC 29342 / M129 / Subtype 1) (Mycoplasmoides pneumoniae) protein is tRNA N6-adenosine threonylcarbamoyltransferase.